Reading from the N-terminus, the 340-residue chain is Fructose import permease protein FruG (340 aa).

9 helical membrane-spanning segments follow: residues 23–43 (IPTL…QALF), 49–69 (LGFI…AVAM), 73–93 (ILTG…AVVG), 101–121 (VPAF…GLLA), 130–150 (MQPF…ASII), 182–202 (LSFN…YVFL), 234–254 (IIYL…TANI), 273–293 (VVIG…SVLG), and 307–327 (FGVP…VFVV).

The protein belongs to the binding-protein-dependent transport system permease family. As to quaternary structure, the complex is composed of an ATP-binding protein (FruK), two transmembrane proteins (FruF and FruG) and a solute-binding protein (FruE).

Its subcellular location is the cell membrane. In terms of biological role, part of the high-affinity ABC transporter complex FruEKFG involved in fructose uptake. Can also transport ribose and xylose, with lower affinity. Probably responsible for the translocation of the substrate across the membrane. The sequence is that of Fructose import permease protein FruG from Bifidobacterium longum (strain NCC 2705).